Consider the following 306-residue polypeptide: Ribonuclease BN (306 aa).

The Zn(2+) site is built by histidine 64, histidine 66, aspartate 68, histidine 69, histidine 141, aspartate 212, and histidine 270. Aspartate 68 functions as the Proton acceptor in the catalytic mechanism.

This sequence belongs to the RNase Z family. RNase BN subfamily. As to quaternary structure, homodimer. Zn(2+) is required as a cofactor.

In terms of biological role, zinc phosphodiesterase, which has both exoribonuclease and endoribonuclease activities. The polypeptide is Ribonuclease BN (Klebsiella pneumoniae subsp. pneumoniae (strain ATCC 700721 / MGH 78578)).